Consider the following 314-residue polypeptide: MSFQFSLTIMLYFQMVIMAGTVMLAYYFEYTDTFTVNVQGFFCYDSSYTKPYPGPDESSDIPPVLLLSLVTGVPVLVIIVGETVVFCLQVATRDFENQEKTLLTGDCCYINPLVRRTVRFLGIYTFGLFATDIFVNAGQVVTGNLAPHFLTVCKPNYTALGCRQFTQFITDANACTGIPDLVIKARRTFPSKDAALSVYAALYLAMYITSTIKAKGTRLAKPVLCLGLMCLAFLTGINRVAEYRNHWSDVIAGFLIGISIAVFLVVCVVNNFKGRRTEHEHWPTENLAQMPIISIPRVENPLEKNHLTAFAEVT.

6 helical membrane passes run 5 to 25 (FSLT…VMLA), 61 to 81 (IPPV…IIVG), 120 to 140 (FLGI…AGQV), 194 to 214 (AALS…TIKA), 223 to 243 (VLCL…VAEY), and 250 to 270 (VIAG…CVVN).

It belongs to the PA-phosphatase related phosphoesterase family.

It is found in the cell membrane. Functionally, induces filopodia formation and promotes neurite growth. The polypeptide is Phospholipid phosphatase-related protein type 5 (Xenopus laevis (African clawed frog)).